A 551-amino-acid polypeptide reads, in one-letter code: MAAKDVKFAGDARDRMLRGVDILANAVKVTLGPKGRNVLIERSFGAARITKDGVTVAKEIELEDKFENMGAQMLREVASKTNDLAGDGTTTATVLAQAIVREGAKSVAAGMNPMDLKRGIEIAVAAVIKDLVKRAKPVASSAEIAQVGTISSNGDAAIGKMIAQAMQKVGNEGVITVEENKSLTTEVDIVEGMKFDRGYLSPYFVTNAEKMAVEFDDAYVLLHEKKVSGLQSMLPLLEAVVQSGKPLVIIAEDVEGEALATLVVNRLRGGLKVAAVKAPGFGDRRKAMLEDLAILTGGQLISDDLGMKLENVTLKMLGRAKKLVIDKENTTIVGGAGKKADIETRVGQIKAQIEETTSDYDREKLQERLAKLAGGVAVIRVGGATEVEVKEKKDRVEDALNATRAAVQEGIVPGGGVALLRAKKAVGRISNDNPDVQAGINIVLKALEAPIRQIAENAGVEGSIVVGKILENKSETFGFDAQTEEYVDMLAKGIVDPAKVVRTALQDASSVAALLVTTECMVAEMPRDAAPAMPGGGGGMGGMGGMGGMGF.

ATP is bound by residues Thr30–Pro33, Lys51, Asp87–Thr91, Gly415, and Asp496.

It belongs to the chaperonin (HSP60) family. In terms of assembly, forms a cylinder of 14 subunits composed of two heptameric rings stacked back-to-back. Interacts with the co-chaperonin GroES.

Its subcellular location is the cytoplasm. It catalyses the reaction ATP + H2O + a folded polypeptide = ADP + phosphate + an unfolded polypeptide.. Functionally, together with its co-chaperonin GroES, plays an essential role in assisting protein folding. The GroEL-GroES system forms a nano-cage that allows encapsulation of the non-native substrate proteins and provides a physical environment optimized to promote and accelerate protein folding. In Rhodopseudomonas palustris (strain BisB18), this protein is Chaperonin GroEL 2.